A 654-amino-acid chain; its full sequence is Probable potassium transport system protein Kup (654 aa).

13 consecutive transmembrane segments (helical) span residues 17–37 (GILVTLGIIYGDIGTSPLYVM), 40–60 (IIGLHTIKPEVVLGGISAIFW), 71–91 (VLITLSADNHGEGGIFALYAL), 99–119 (WLIIPAIIGGSALLADGIITP), 137–157 (INTVPIVIAILVVLFTIQQFG), 164–184 (FFAPMMMIWFAMLAILGILQI), 202–222 (LLSIHPDGFYVLGFVFLCTTG), 240–260 (ISWIFVKIALLLNYFGQGAYL), 281–301 (LVMPEWFQPFGIVISTMAAVI), 338–358 (IYIPSINWLLLAGCIGIVLHF), 369–389 (GLAIVLCMIMTTILLTYFMIL), 394–414 (WFIIAPLILLYLVIEFSFLIA), and 423–443 (GYVTLIIASALTFIMSIWYTA).

It belongs to the HAK/KUP transporter (TC 2.A.72) family.

Its subcellular location is the cell inner membrane. The catalysed reaction is K(+)(in) + H(+)(in) = K(+)(out) + H(+)(out). Transport of potassium into the cell. Likely operates as a K(+):H(+) symporter. This is Probable potassium transport system protein Kup from Flavobacterium psychrophilum (strain ATCC 49511 / DSM 21280 / CIP 103535 / JIP02/86).